Consider the following 105-residue polypeptide: Large ribosomal subunit protein eL30 (105 aa).

Belongs to the eukaryotic ribosomal protein eL30 family.

The sequence is that of Large ribosomal subunit protein eL30 (RPL30) from Candida glabrata (strain ATCC 2001 / BCRC 20586 / JCM 3761 / NBRC 0622 / NRRL Y-65 / CBS 138) (Yeast).